A 404-amino-acid chain; its full sequence is MVERVYYKDPYLREIDAKIVDVRKEKDRVEVVLDRTIFYPEGGGQPGDRGVIKGNDFEIMVEDTIEKNGEIFHIGKLRGEIPKEGEKVKLYLDWEWRYGNMQMHTGQHILSAVLKKLYDLDTTGFNIFRDYAKIEVNGEVNWDMIERAELEVNKIIINDLPVVIEEYDKLPEEIALKLRKNVTKVKEKIRIVKIGDVDVTPCGGTHVKSTREVGIIKVLRFYKKSKNLWRIEFTCGYRAISKMNEILRDYWGSLDLMPNKNPPLIERINEVLRTVNSLENRIEELRREIWEWKGKALLKEGVKVGNYTVITHVENWNMKDAQAFAIDFVKKNSNTILLLANEKYVLFAKNEGVPVSMRELLKEVIDELGGKGGGTDNLARGRVEAKPEEIFDVALEKLRSHLQV.

Zn(2+)-binding residues include His104, His108, Cys202, and His206.

It belongs to the class-II aminoacyl-tRNA synthetase family. Editing domain AlaX-L subfamily. Zn(2+) serves as cofactor.

The protein localises to the cytoplasm. Its function is as follows. Functions in trans to edit the amino acid moiety from mischarged charged tRNA(Ala). The chain is Alanyl-tRNA editing protein AlaX-L (alaXL) from Pyrococcus horikoshii (strain ATCC 700860 / DSM 12428 / JCM 9974 / NBRC 100139 / OT-3).